We begin with the raw amino-acid sequence, 262 residues long: uncharacterized protein (262 aa).

This sequence belongs to the glycosyltransferase 2 family.

This is an uncharacterized protein from Mycobacterium tuberculosis (strain CDC 1551 / Oshkosh).